We begin with the raw amino-acid sequence, 422 residues long: Adenylosuccinate synthetase (422 aa).

GTP-binding positions include 11-17 (GDEGKGK) and 39-41 (GHT). Residue Asp12 is the Proton acceptor of the active site. Mg(2+)-binding residues include Asp12 and Gly39. IMP is bound by residues 12–15 (DEGK), 37–40 (NAGH), Thr129, Arg143, Asn219, Thr234, and Arg298. The active-site Proton donor is the His40. Substrate is bound at residue 294-300 (VTTGRRR). GTP is bound by residues Arg300, 326 to 328 (KLD), and 409 to 411 (GTG).

It belongs to the adenylosuccinate synthetase family. Homodimer. The cofactor is Mg(2+).

The protein localises to the cytoplasm. The enzyme catalyses IMP + L-aspartate + GTP = N(6)-(1,2-dicarboxyethyl)-AMP + GDP + phosphate + 2 H(+). Its pathway is purine metabolism; AMP biosynthesis via de novo pathway; AMP from IMP: step 1/2. Plays an important role in the de novo pathway and in the salvage pathway of purine nucleotide biosynthesis. Catalyzes the first committed step in the biosynthesis of AMP from IMP. The chain is Adenylosuccinate synthetase from Blastomyces gilchristii (strain SLH14081) (Blastomyces dermatitidis).